The primary structure comprises 92 residues: Integration host factor subunit beta (92 aa).

Belongs to the bacterial histone-like protein family. In terms of assembly, heterodimer of an alpha and a beta chain.

In terms of biological role, this protein is one of the two subunits of integration host factor, a specific DNA-binding protein that functions in genetic recombination as well as in transcriptional and translational control. The chain is Integration host factor subunit beta from Vibrio cholerae serotype O1 (strain ATCC 39541 / Classical Ogawa 395 / O395).